The sequence spans 319 residues: Replication factor C small subunit (319 aa).

45–52 (GPPGTGKT) contributes to the ATP binding site.

Belongs to the activator 1 small subunits family. RfcS subfamily. In terms of assembly, heteropentamer composed of four small subunits (RfcS) and one large subunit (RfcL). Both subunits interact with PCNA.

Its function is as follows. Part of the RFC clamp loader complex which loads the PCNA sliding clamp onto DNA. The complex possesses DNA-dependent ATPase activity which is further stimulated by PCNA. The chain is Replication factor C small subunit (rfcS) from Archaeoglobus fulgidus (strain ATCC 49558 / DSM 4304 / JCM 9628 / NBRC 100126 / VC-16).